A 503-amino-acid chain; its full sequence is Cytochrome P450 3A25 (503 aa).

Cys442 contributes to the heme binding site.

Belongs to the cytochrome P450 family. Requires heme as cofactor.

The protein resides in the endoplasmic reticulum membrane. It is found in the microsome membrane. It carries out the reaction an organic molecule + reduced [NADPH--hemoprotein reductase] + O2 = an alcohol + oxidized [NADPH--hemoprotein reductase] + H2O + H(+). Its function is as follows. Cytochromes P450 are a group of heme-thiolate monooxygenases. In liver microsomes, this enzyme is involved in an NADPH-dependent electron transport pathway. It oxidizes a variety of structurally unrelated compounds, including steroids, fatty acids, and xenobiotics. This chain is Cytochrome P450 3A25 (Cyp3a25), found in Mus musculus (Mouse).